A 457-amino-acid chain; its full sequence is MDLAAVILAAGRGTRMKSKLPKVLHRVCGRPMLSYIVNAVAAAGIKKIVVVAGYGAEQVAREVEGLAQVALQAEQLGTAHALLQAGPFLSGFAGKVLVLCGDTPLIEAGTLAKLAGFHRTAGAAATLLTAEPDDPAGYGRVIRDGRGNVIKIVEEKDASPAEKLIREINTGIYCFEAAGLFDALKGIRPANAQGEYYLTDIVEIYVRAGLAVAAFKLENPVEVTGINDRRQLAEVEKYLRRRVLEDLMQSGVTVLDPASTFVDGTVRVGRDTVIYPFTFLEGSTIIGEDCVIGPGSRLVNAVVGNGVSVQNSVVIESQIGDCCSIGPFAYLRPETRLGRNVKVGDFVEIKKSVIGDGSKVPHLSYVGDATVGAGVNIGCGTITCNYDGRNKWPTRIGDGAFIGSNTNLVAPVEIGAGAVTGAGSTITKNVPDGALAVERARQVLVPDWAAKKRDKKV.

The tract at residues 1–229 (MDLAAVILAA…PVEVTGINDR (229 aa)) is pyrophosphorylase. UDP-N-acetyl-alpha-D-glucosamine is bound by residues 8 to 11 (LAAG), Lys22, Gln72, and 77 to 78 (GT). Residue Asp102 coordinates Mg(2+). UDP-N-acetyl-alpha-D-glucosamine-binding residues include Gly139, Glu154, Asn169, and Asn227. Residue Asn227 coordinates Mg(2+). Residues 230-250 (RQLAEVEKYLRRRVLEDLMQS) form a linker region. Positions 251–457 (GVTVLDPAST…WAAKKRDKKV (207 aa)) are N-acetyltransferase. UDP-N-acetyl-alpha-D-glucosamine is bound by residues Arg332 and Lys350. His362 serves as the catalytic Proton acceptor. UDP-N-acetyl-alpha-D-glucosamine is bound by residues Tyr365 and Asn376. Acetyl-CoA is bound by residues 385–386 (NY), Ser404, Ala422, and Arg439.

The protein in the N-terminal section; belongs to the N-acetylglucosamine-1-phosphate uridyltransferase family. This sequence in the C-terminal section; belongs to the transferase hexapeptide repeat family. In terms of assembly, homotrimer. Mg(2+) is required as a cofactor.

Its subcellular location is the cytoplasm. The enzyme catalyses alpha-D-glucosamine 1-phosphate + acetyl-CoA = N-acetyl-alpha-D-glucosamine 1-phosphate + CoA + H(+). It catalyses the reaction N-acetyl-alpha-D-glucosamine 1-phosphate + UTP + H(+) = UDP-N-acetyl-alpha-D-glucosamine + diphosphate. The protein operates within nucleotide-sugar biosynthesis; UDP-N-acetyl-alpha-D-glucosamine biosynthesis; N-acetyl-alpha-D-glucosamine 1-phosphate from alpha-D-glucosamine 6-phosphate (route II): step 2/2. It functions in the pathway nucleotide-sugar biosynthesis; UDP-N-acetyl-alpha-D-glucosamine biosynthesis; UDP-N-acetyl-alpha-D-glucosamine from N-acetyl-alpha-D-glucosamine 1-phosphate: step 1/1. It participates in bacterial outer membrane biogenesis; LPS lipid A biosynthesis. In terms of biological role, catalyzes the last two sequential reactions in the de novo biosynthetic pathway for UDP-N-acetylglucosamine (UDP-GlcNAc). The C-terminal domain catalyzes the transfer of acetyl group from acetyl coenzyme A to glucosamine-1-phosphate (GlcN-1-P) to produce N-acetylglucosamine-1-phosphate (GlcNAc-1-P), which is converted into UDP-GlcNAc by the transfer of uridine 5-monophosphate (from uridine 5-triphosphate), a reaction catalyzed by the N-terminal domain. The polypeptide is Bifunctional protein GlmU (Pelotomaculum thermopropionicum (strain DSM 13744 / JCM 10971 / SI)).